The primary structure comprises 357 residues: DNA polymerase IV 2 (357 aa).

Positions 4-184 (IIHVDMDAFY…LAVKKFHGVG (181 aa)) constitute a UmuC domain. Mg(2+) contacts are provided by D8 and D102. E103 is an active-site residue.

The protein belongs to the DNA polymerase type-Y family. As to quaternary structure, monomer. Mg(2+) serves as cofactor.

It localises to the cytoplasm. It carries out the reaction DNA(n) + a 2'-deoxyribonucleoside 5'-triphosphate = DNA(n+1) + diphosphate. Poorly processive, error-prone DNA polymerase involved in untargeted mutagenesis. Copies undamaged DNA at stalled replication forks, which arise in vivo from mismatched or misaligned primer ends. These misaligned primers can be extended by PolIV. Exhibits no 3'-5' exonuclease (proofreading) activity. May be involved in translesional synthesis, in conjunction with the beta clamp from PolIII. This is DNA polymerase IV 2 (dinB2) from Agrobacterium fabrum (strain C58 / ATCC 33970) (Agrobacterium tumefaciens (strain C58)).